The chain runs to 153 residues: UPF0127 protein TGAM_1372 (153 aa).

This sequence belongs to the UPF0127 family.

The sequence is that of UPF0127 protein TGAM_1372 from Thermococcus gammatolerans (strain DSM 15229 / JCM 11827 / EJ3).